We begin with the raw amino-acid sequence, 196 residues long: Probable thymidylate kinase (196 aa).

7 to 14 contributes to the ATP binding site; the sequence is GIDGAGKT.

This sequence belongs to the thymidylate kinase family.

The catalysed reaction is dTMP + ATP = dTDP + ADP. The chain is Probable thymidylate kinase (tmk) from Archaeoglobus fulgidus (strain ATCC 49558 / DSM 4304 / JCM 9628 / NBRC 100126 / VC-16).